The chain runs to 303 residues: Proteasome subunit beta (303 aa).

A propeptide spans 1-67 (MTWQFPDRLS…SGGTGQLPHG (67 aa)) (removed in mature form; by autocatalysis). Catalysis depends on Thr-68, which acts as the Nucleophile.

This sequence belongs to the peptidase T1B family. The 20S proteasome core is composed of 14 alpha and 14 beta subunits that assemble into four stacked heptameric rings, resulting in a barrel-shaped structure. The two inner rings, each composed of seven catalytic beta subunits, are sandwiched by two outer rings, each composed of seven alpha subunits. The catalytic chamber with the active sites is on the inside of the barrel. Has a gated structure, the ends of the cylinder being occluded by the N-termini of the alpha-subunits. Is capped by the proteasome-associated ATPase, ARC.

The protein resides in the cytoplasm. The enzyme catalyses Cleavage of peptide bonds with very broad specificity.. It functions in the pathway protein degradation; proteasomal Pup-dependent pathway. The formation of the proteasomal ATPase ARC-20S proteasome complex, likely via the docking of the C-termini of ARC into the intersubunit pockets in the alpha-rings, may trigger opening of the gate for substrate entry. Interconversion between the open-gate and close-gate conformations leads to a dynamic regulation of the 20S proteasome proteolysis activity. Component of the proteasome core, a large protease complex with broad specificity involved in protein degradation. The protein is Proteasome subunit beta of Mycolicibacterium paratuberculosis (strain ATCC BAA-968 / K-10) (Mycobacterium paratuberculosis).